Reading from the N-terminus, the 512-residue chain is Cytochrome P450 26B1 (512 aa).

Cys-441 is a binding site for heme.

It belongs to the cytochrome P450 family. It depends on heme as a cofactor.

The protein resides in the endoplasmic reticulum membrane. The protein localises to the microsome membrane. The enzyme catalyses all-trans-retinoate + reduced [NADPH--hemoprotein reductase] + O2 = all-trans-4-hydroxyretinoate + oxidized [NADPH--hemoprotein reductase] + H2O + H(+). The catalysed reaction is all-trans-retinoate + reduced [NADPH--hemoprotein reductase] + O2 = all-trans-18-hydroxyretinoate + oxidized [NADPH--hemoprotein reductase] + H2O + H(+). In terms of biological role, a cytochrome P450 monooxygenase involved in the metabolism of retinoates (RAs), the active metabolites of vitamin A, and critical signaling molecules in animals. RAs exist as at least four different isomers: all-trans-RA (atRA), 9-cis-RA, 13-cis-RA, and 9,13-dicis-RA, where atRA is considered to be the biologically active isomer, although 9-cis-RA and 13-cis-RA also have activity. Catalyzes the hydroxylation of atRA primarily at C-4 and C-18, thereby contributing to the regulation of atRA homeostasis and signaling. Hydroxylation of atRA limits its biological activity and initiates a degradative process leading to its eventual elimination. Involved in the convertion of atRA to all-trans-4-oxo-RA. Can oxidize all-trans-13,14-dihydroretinoate (DRA) to metabolites which could include all-trans-4-oxo-DRA, all-trans-4-hydroxy-DRA, all-trans-5,8-epoxy-DRA, and all-trans-18-hydroxy-DRA. Shows preference for the following substrates: atRA &gt; 9-cis-RA &gt; 13-cis-RA. Plays a central role in germ cell development: acts by degrading RAs in the developing testis, preventing STRA8 expression, thereby leading to delay of meiosis. Required for the maintenance of the undifferentiated state of male germ cells during embryonic development in Sertoli cells, inducing arrest in G0 phase of the cell cycle and preventing meiotic entry. Plays a role in skeletal development, both at the level of patterning and in the ossification of bone and the establishment of some synovial joints. Essential for postnatal survival. Also has a significant activity in oxidation of tazarotenic acid and may therefore metabolize that xenobiotic in vivo. The polypeptide is Cytochrome P450 26B1 (Cyp26b1) (Mus musculus (Mouse)).